The following is a 197-amino-acid chain: Peptide deformylase (197 aa).

Fe cation contacts are provided by Cys106 and His148. Glu149 is a catalytic residue. A Fe cation-binding site is contributed by His152.

The protein belongs to the polypeptide deformylase family. Requires Fe(2+) as cofactor.

The catalysed reaction is N-terminal N-formyl-L-methionyl-[peptide] + H2O = N-terminal L-methionyl-[peptide] + formate. Removes the formyl group from the N-terminal Met of newly synthesized proteins. Requires at least a dipeptide for an efficient rate of reaction. N-terminal L-methionine is a prerequisite for activity but the enzyme has broad specificity at other positions. This chain is Peptide deformylase, found in Mycobacterium tuberculosis (strain ATCC 25177 / H37Ra).